The primary structure comprises 688 residues: Nucleolar protein 10 (688 aa).

Methionine 1 is modified (N-acetylmethionine). Serine 25 is modified (phosphoserine). WD repeat units lie at residues 44-82 (ELIQ…CYDT), 88-124 (KFER…FHSQ), 127-163 (FYYK…RLNL), 170-205 (NPLQ…CWDP), 219-258 (NSVT…LYDL), 262-300 (KPLL…MWNK), and 304-341 (KIFT…IYYI). A coiled-coil region spans residues 423-446 (EYRKDKIRQKIEETRAQRVQLKKL). Position 475 is a phosphoserine (serine 475). The residue at position 481 (threonine 481) is a Phosphothreonine. At serine 514 the chain carries Phosphoserine. Coiled coils occupy residues 514–589 (SEKR…TVLK) and 640–673 (SKQL…LRRS). 2 disordered regions span residues 529–557 (LREK…EKAW) and 645–688 (FTLK…RSFH). Basic and acidic residues predominate over residues 648–663 (KRSEQQKKQQEAEKLH). Positions 664–688 (RQERKRLRRSAGHLKSRHKRGRSFH) are enriched in basic residues.

The protein belongs to the WD repeat NOL10/ENP2 family.

It is found in the nucleus. Its subcellular location is the nucleolus. This chain is Nucleolar protein 10 (NOL10), found in Homo sapiens (Human).